The sequence spans 310 residues: ADP-L-glycero-D-manno-heptose-6-epimerase (310 aa).

NADP(+)-binding positions include 10–11, 31–32, K38, K53, 75–79, and N92; these read FI, DN, and EGACS. Y140 (proton acceptor) is an active-site residue. Position 144 (K144) interacts with NADP(+). N169 lines the substrate pocket. V170 and K178 together coordinate NADP(+). Residue K178 is the Proton acceptor of the active site. Residues S180, H187, 201 to 204, and R209 contribute to the substrate site; that span reads FEGS. K267 carries the N6-acetyllysine modification. Y272 contacts substrate.

Belongs to the NAD(P)-dependent epimerase/dehydratase family. HldD subfamily. As to quaternary structure, homopentamer. NADP(+) is required as a cofactor. NAD(+) serves as cofactor.

The enzyme catalyses ADP-D-glycero-beta-D-manno-heptose = ADP-L-glycero-beta-D-manno-heptose. It functions in the pathway nucleotide-sugar biosynthesis; ADP-L-glycero-beta-D-manno-heptose biosynthesis; ADP-L-glycero-beta-D-manno-heptose from D-glycero-beta-D-manno-heptose 7-phosphate: step 4/4. Its pathway is bacterial outer membrane biogenesis; LPS core biosynthesis. Its activity is regulated as follows. Completely inhibited by ADP and ADP-glucose, and partially inhibited by ATP and NADH. Catalyzes the interconversion between ADP-D-glycero-beta-D-manno-heptose and ADP-L-glycero-beta-D-manno-heptose via an epimerization at carbon 6 of the heptose. The chain is ADP-L-glycero-D-manno-heptose-6-epimerase (hldD) from Escherichia coli (strain K12).